The chain runs to 192 residues: uncharacterized protein (192 aa).

In terms of domain architecture, Nudix hydrolase spans 29–160 (HRQAAVLIPI…PLDIYRRGDS (132 aa)). The Nudix box signature appears at 67 to 89 (GAVDDTDASVIAAALREAEEEVA). 2 residues coordinate Mg(2+): Glu-83 and Glu-87.

It belongs to the Nudix hydrolase family. PCD1 subfamily. Mn(2+) is required as a cofactor. Mg(2+) serves as cofactor.

In terms of biological role, probably mediates the hydrolysis of some nucleoside diphosphate derivatives. This is an uncharacterized protein from Escherichia coli (strain SMS-3-5 / SECEC).